Here is a 776-residue protein sequence, read N- to C-terminus: Homoaconitase, mitochondrial (776 aa).

Residues 1–24 (MVALRRAVALNAVAIARLQTRALT) constitute a mitochondrion transit peptide. The [4Fe-4S] cluster site is built by C392, C459, and C462.

It belongs to the aconitase/IPM isomerase family. Requires [4Fe-4S] cluster as cofactor.

It is found in the mitochondrion. It catalyses the reaction (2R,3S)-homoisocitrate = cis-homoaconitate + H2O. Its pathway is amino-acid biosynthesis; L-lysine biosynthesis via AAA pathway; L-alpha-aminoadipate from 2-oxoglutarate: step 3/5. Functionally, catalyzes the reversible hydration of cis-homoaconitate to (2R,3S)-homoisocitrate, a step in the alpha-aminoadipate pathway for lysine biosynthesis. The polypeptide is Homoaconitase, mitochondrial (LYS4) (Gibberella zeae (strain ATCC MYA-4620 / CBS 123657 / FGSC 9075 / NRRL 31084 / PH-1) (Wheat head blight fungus)).